Here is a 631-residue protein sequence, read N- to C-terminus: Nucleoside triphosphatase I (631 aa).

The Helicase ATP-binding domain occupies 42 to 204 (FLGLDTMHSI…TMIVNLLRPK (163 aa)). 55 to 62 (HDTGVGKT) contacts ATP. The DEXH box signature appears at 141 to 144 (DECH). The 170-residue stretch at 367–536 (KFTEVCLKIL…LFKVFKESSI (170 aa)) folds into the Helicase C-terminal domain. Positions 457–524 (DIFILDMTWN…NIIKTKSKEF (68 aa)) are binding to the cap-specific mRNA (nucleoside-2'-O-)-methyltransferase.

It belongs to the helicase family. NPH I subfamily. Monomer. Interacts (via C-terminus) with RAP94 (via N-terminus). Interacts with the cap-specific mRNA (nucleoside-2'-O-)-methyltransferase.

Its subcellular location is the virion. It carries out the reaction a ribonucleoside 5'-triphosphate + H2O = a ribonucleoside 5'-diphosphate + phosphate + H(+). In terms of biological role, DNA-dependent ATPase required for providing the needed energy to achieve the termination of early transcripts. Acts in concert with the RAP94 subunit of the virion RNA polymerase and the capping enzyme/VTF to catalyze release of UUUUUNU-containing nascent RNA from the elongation complex. NPH-I must bind ssDNA in order to exhibit ATPase activity. This Erythrocebus patas (Red guenon) protein is Nucleoside triphosphatase I (NPH1).